Here is a 328-residue protein sequence, read N- to C-terminus: Tetraacyldisaccharide 4'-kinase (328 aa).

55-62 (TAGGNGKT) contacts ATP.

Belongs to the LpxK family.

It carries out the reaction a lipid A disaccharide + ATP = a lipid IVA + ADP + H(+). It functions in the pathway glycolipid biosynthesis; lipid IV(A) biosynthesis; lipid IV(A) from (3R)-3-hydroxytetradecanoyl-[acyl-carrier-protein] and UDP-N-acetyl-alpha-D-glucosamine: step 6/6. Functionally, transfers the gamma-phosphate of ATP to the 4'-position of a tetraacyldisaccharide 1-phosphate intermediate (termed DS-1-P) to form tetraacyldisaccharide 1,4'-bis-phosphate (lipid IVA). The polypeptide is Tetraacyldisaccharide 4'-kinase (Escherichia coli O157:H7).